A 391-amino-acid chain; its full sequence is Phosphoglycerate kinase (391 aa).

Substrate contacts are provided by residues 21 to 23 (DLN), arginine 36, 59 to 62 (HLGR), arginine 113, and arginine 146. Residues lysine 197, glutamate 319, and 345–348 (GGDT) each bind ATP.

It belongs to the phosphoglycerate kinase family. As to quaternary structure, monomer.

The protein resides in the cytoplasm. It catalyses the reaction (2R)-3-phosphoglycerate + ATP = (2R)-3-phospho-glyceroyl phosphate + ADP. Its pathway is carbohydrate degradation; glycolysis; pyruvate from D-glyceraldehyde 3-phosphate: step 2/5. The polypeptide is Phosphoglycerate kinase (Shewanella baltica (strain OS155 / ATCC BAA-1091)).